We begin with the raw amino-acid sequence, 440 residues long: UDP-N-acetylmuramoylalanine--D-glutamate ligase (440 aa).

109-115 is a binding site for ATP; it reads GTNGKTT.

Belongs to the MurCDEF family.

The protein resides in the cytoplasm. It catalyses the reaction UDP-N-acetyl-alpha-D-muramoyl-L-alanine + D-glutamate + ATP = UDP-N-acetyl-alpha-D-muramoyl-L-alanyl-D-glutamate + ADP + phosphate + H(+). It functions in the pathway cell wall biogenesis; peptidoglycan biosynthesis. In terms of biological role, cell wall formation. Catalyzes the addition of glutamate to the nucleotide precursor UDP-N-acetylmuramoyl-L-alanine (UMA). The protein is UDP-N-acetylmuramoylalanine--D-glutamate ligase of Rubrobacter xylanophilus (strain DSM 9941 / JCM 11954 / NBRC 16129 / PRD-1).